The sequence spans 516 residues: L-amino-acid oxidase (516 aa).

An N-terminal signal peptide occupies residues 1–18 (MNVFFMFSLLFLAALGSC). An intrachain disulfide couples Cys28 to Cys189. FAD contacts are provided by residues 61 to 62 (MA), 81 to 82 (EA), Arg89, and 103 to 106 (GPMR). 2 residues coordinate substrate: Arg106 and His239. Residue Val279 participates in FAD binding. Cys349 and Cys430 are joined by a disulfide. Asn379 carries N-linked (GlcNAc...) asparagine glycosylation. Tyr390 serves as a coordination point for substrate. FAD-binding positions include Glu475 and 482–487 (GWIDST). Substrate is bound at residue 482 to 483 (GW).

The protein belongs to the flavin monoamine oxidase family. FIG1 subfamily. As to quaternary structure, homodimer; non-covalently linked. FAD is required as a cofactor. As to expression, expressed by the venom gland.

It is found in the secreted. The enzyme catalyses an L-alpha-amino acid + O2 + H2O = a 2-oxocarboxylate + H2O2 + NH4(+). Its function is as follows. Catalyzes an oxidative deamination of predominantly hydrophobic and aromatic L-amino acids, thus producing hydrogen peroxide that may contribute to the diverse toxic effects of this enzyme. Exhibits diverse biological activities, such as hemolysis, edema, hemorrhage, apoptosis, antibacterial and antiparasitic activities, as well as regulation of platelet aggregation. Effects of snake L-amino oxidases on platelets are controversial, since they either induce aggregation or inhibit agonist-induced aggregation. These different effects are probably due to different experimental conditions. This is L-amino-acid oxidase from Crotalus adamanteus (Eastern diamondback rattlesnake).